A 152-amino-acid polypeptide reads, in one-letter code: Transcriptional regulator MraZ (152 aa).

SpoVT-AbrB domains lie at 5–52 (ASAI…PIHE) and 81–124 (AHEV…DEQA).

The protein belongs to the MraZ family. Forms oligomers.

Its subcellular location is the cytoplasm. The protein localises to the nucleoid. The polypeptide is Transcriptional regulator MraZ (Shewanella sp. (strain ANA-3)).